The primary structure comprises 160 residues: Lipoprotein signal peptidase (160 aa).

Helical transmembrane passes span 7-27 (VIYY…KWLV), 61-81 (GQFW…IIYI), and 91-111 (AGIG…DRVF). Residues aspartate 117 and aspartate 135 contribute to the active site. A helical membrane pass occupies residues 133–153 (IADSALTVGVILLFIHMFFFA).

This sequence belongs to the peptidase A8 family.

The protein localises to the cell membrane. The catalysed reaction is Release of signal peptides from bacterial membrane prolipoproteins. Hydrolyzes -Xaa-Yaa-Zaa-|-(S,diacylglyceryl)Cys-, in which Xaa is hydrophobic (preferably Leu), and Yaa (Ala or Ser) and Zaa (Gly or Ala) have small, neutral side chains.. It functions in the pathway protein modification; lipoprotein biosynthesis (signal peptide cleavage). In terms of biological role, this protein specifically catalyzes the removal of signal peptides from prolipoproteins. The chain is Lipoprotein signal peptidase from Geobacillus thermodenitrificans (strain NG80-2).